Here is a 154-residue protein sequence, read N- to C-terminus: uncharacterized protein (154 aa).

The next 4 membrane-spanning stretches (helical) occupy residues 39-61 (LLIF…FFAR), 65-87 (LPYI…VSLL), 94-113 (VESL…RVFI), and 128-150 (LLIN…SPFT).

It localises to the cell membrane. This is an uncharacterized protein from Aquifex aeolicus (strain VF5).